We begin with the raw amino-acid sequence, 284 residues long: Kynurenine formamidase avaC (284 aa).

The HGGXW signature appears at 47 to 51 (HGGGW). Ser-130 serves as the catalytic Nucleophile.

Belongs to the kynurenine formamidase family.

The enzyme catalyses N-formyl-L-kynurenine + H2O = L-kynurenine + formate + H(+). It participates in secondary metabolite metabolism. Kynurenine formamidase; part of the cluster that mediates the biosynthesis of a highly modified cyclo-arginine-tryptophan dipeptide (cRW). Within the pathway, avaC catalyzes the deformylation of the cyclo-Arg-formylkynurenine iketopiperazine (DKP), produced by the FAD-dependent monooxygenase avaB. The first step of the pathway is perfornmed by the arginine-containing cyclodipeptide synthase (RCPDS) avaA that acts as the scaffold-generating enzyme and is responsible for formation of the cyclo-Arg-Trp (cRW) diketopiperazine. AvaB then acts as a multifunctional flavoenzyme that is responsible for generating the cyclo-Arg-formylkynurenine DKP, which can be deformylated by avaC. AvaB then further catalyzes an additional N-oxidation followed by cyclization and dehydration. The next step is an N-acetylation of the guanidine group catalyzed by the arginine N-acetyltransferase avaD. The roles of the additional enzymes identified within the ava cluster still have to be determined. The protein is Kynurenine formamidase avaC of Aspergillus versicolor.